The primary structure comprises 935 residues: Protein translocase subunit SecA (935 aa).

ATP is bound by residues Q90, 108–112 (GEGKT), and D504. The tract at residues 543 to 568 (GGRRPQGFGTSKKKGKNWSPSDADIF) is disordered.

The protein belongs to the SecA family. As to quaternary structure, monomer and homodimer. Part of the essential Sec protein translocation apparatus which comprises SecA, SecYEG and auxiliary proteins SecDF. Other proteins may also be involved.

It is found in the cell inner membrane. The protein localises to the cellular thylakoid membrane. Its subcellular location is the cytoplasm. The catalysed reaction is ATP + H2O + cellular proteinSide 1 = ADP + phosphate + cellular proteinSide 2.. Its function is as follows. Part of the Sec protein translocase complex. Interacts with the SecYEG preprotein conducting channel. Has a central role in coupling the hydrolysis of ATP to the transfer of proteins into and across the cell membrane, serving as an ATP-driven molecular motor driving the stepwise translocation of polypeptide chains across the membrane. Probably participates in protein translocation into and across both the cytoplasmic and thylakoid membranes in cyanobacterial cells. This is Protein translocase subunit SecA from Rippkaea orientalis (strain PCC 8801 / RF-1) (Cyanothece sp. (strain PCC 8801)).